We begin with the raw amino-acid sequence, 248 residues long: Adenosylcobinamide-GDP ribazoletransferase (248 aa).

Helical transmembrane passes span 34 to 54 (LVFA…LFYI), 58 to 78 (FFPP…LTGG), 113 to 133 (AVLA…SIPL), 139 to 159 (ALLL…GSTV), 185 to 205 (IIYF…LAAA), and 227 to 247 (DILG…FYLF).

The protein belongs to the CobS family. The cofactor is Mg(2+).

It is found in the cell membrane. It catalyses the reaction alpha-ribazole + adenosylcob(III)inamide-GDP = adenosylcob(III)alamin + GMP + H(+). It carries out the reaction alpha-ribazole 5'-phosphate + adenosylcob(III)inamide-GDP = adenosylcob(III)alamin 5'-phosphate + GMP + H(+). It participates in cofactor biosynthesis; adenosylcobalamin biosynthesis; adenosylcobalamin from cob(II)yrinate a,c-diamide: step 7/7. In terms of biological role, joins adenosylcobinamide-GDP and alpha-ribazole to generate adenosylcobalamin (Ado-cobalamin). Also synthesizes adenosylcobalamin 5'-phosphate from adenosylcobinamide-GDP and alpha-ribazole 5'-phosphate. This Acetivibrio thermocellus (strain ATCC 27405 / DSM 1237 / JCM 9322 / NBRC 103400 / NCIMB 10682 / NRRL B-4536 / VPI 7372) (Clostridium thermocellum) protein is Adenosylcobinamide-GDP ribazoletransferase.